The chain runs to 328 residues: N-acetyl-gamma-glutamyl-phosphate reductase (328 aa).

Cys143 is an active-site residue.

Belongs to the NAGSA dehydrogenase family. Type 1 subfamily.

It localises to the cytoplasm. It carries out the reaction N-acetyl-L-glutamate 5-semialdehyde + phosphate + NADP(+) = N-acetyl-L-glutamyl 5-phosphate + NADPH + H(+). The protein operates within amino-acid biosynthesis; L-arginine biosynthesis; N(2)-acetyl-L-ornithine from L-glutamate: step 3/4. Catalyzes the NADPH-dependent reduction of N-acetyl-5-glutamyl phosphate to yield N-acetyl-L-glutamate 5-semialdehyde. The chain is N-acetyl-gamma-glutamyl-phosphate reductase from Methanoregula boonei (strain DSM 21154 / JCM 14090 / 6A8).